The sequence spans 359 residues: N-acetyl-gamma-glutamyl-phosphate reductase (359 aa).

Cys-162 is an active-site residue.

It belongs to the NAGSA dehydrogenase family. Type 1 subfamily.

It localises to the cytoplasm. The catalysed reaction is N-acetyl-L-glutamate 5-semialdehyde + phosphate + NADP(+) = N-acetyl-L-glutamyl 5-phosphate + NADPH + H(+). It participates in amino-acid biosynthesis; L-arginine biosynthesis; N(2)-acetyl-L-ornithine from L-glutamate: step 3/4. Functionally, catalyzes the NADPH-dependent reduction of N-acetyl-5-glutamyl phosphate to yield N-acetyl-L-glutamate 5-semialdehyde. In Prochlorococcus marinus (strain MIT 9211), this protein is N-acetyl-gamma-glutamyl-phosphate reductase.